A 439-amino-acid chain; its full sequence is MTQFLPPNLLALFAPRDPIPYLPPLEKLPHEKHHNQPYCGIAPYIREFEDPRDAPPPTRAETREERMERKRREKIERRQQEVETELKMWDPHNDPNAQGDAFKTLFVARVNYDTTESKLRREFEVYGPIKRIHMVYSKRSGKPRGYAFIEYEHERDMHSAYKHADGKKIDGRRVLVDVERGRTVKGWRPRRLGGGLGGTRRGGADVNIRHSGRDDTSRYDERPGPSPLPHRDRDRDRERERRERSRERDKERERRRSRSRDRRRRSRSRDKEERRRSRERSKDKDRDRKRRSSRSRERARRERERKEELRGGGGGGGDMAEPSEAGDAPPDDGPPGELGPDGPDGPEEKGRDRDRDRRRSHRSERERRRDRDRDRDREHKRGERGGDRGRDEARGGGGGGQDNGLEGLGNDGRDMYMESEGGDGYLAPENGYLMEAAPE.

Threonine 2 is subject to N-acetylthreonine. Residues 48–79 are disordered; it reads FEDPRDAPPPTRAETREERMERKRREKIERRQ. Residues 60–79 are compositionally biased toward basic and acidic residues; that stretch reads AETREERMERKRREKIERRQ. Positions 92-202 are required for interaction with U1 RNA; the sequence is HNDPNAQGDA…GGGLGGTRRG (111 aa). Residues 103-181 enclose the RRM domain; sequence KTLFVARVNY…RRVLVDVERG (79 aa). Lysine 118 bears the N6-acetyllysine mark. Position 126 is a phosphotyrosine (tyrosine 126). The segment at 187–439 is disordered; the sequence is WRPRRLGGGL…NGYLMEAAPE (253 aa). Positions 192–201 are enriched in gly residues; the sequence is LGGGLGGTRR. Residues 207-254 are compositionally biased toward basic and acidic residues; the sequence is NIRHSGRDDTSRYDERPGPSPLPHRDRDRDRERERRERSRERDKERER. Residues serine 226 and serine 268 each carry the phosphoserine modification. Positions 255-268 are enriched in basic residues; it reads RRSRSRDRRRRSRS. Basic and acidic residues-rich tracts occupy residues 269–286 and 294–310; these read RDKE…DKDR and RSRE…EELR. Phosphoserine is present on serine 323. The span at 346 to 394 shows a compositional bias: basic and acidic residues; that stretch reads PEEKGRDRDRDRRRSHRSERERRRDRDRDRDREHKRGERGGDRGRDEAR. Residue lysine 349 forms a Glycyl lysine isopeptide (Lys-Gly) (interchain with G-Cter in SUMO2) linkage. Residues 395–410 are compositionally biased toward gly residues; it reads GGGGGGQDNGLEGLGN.

As to quaternary structure, component of the U1 snRNP. The U1 snRNP is composed of the U1 snRNA and the 7 core Sm proteins SNRPB, SNRPD1, SNRPD2, SNRPD3, SNRPE, SNRPF and SNRPG that assemble in a heptameric protein ring on the Sm site of the small nuclear RNA to form the core snRNP, and at least three U1 snRNP-specific proteins SNRNP70/U1-70K, SNRPA/U1-A and SNRPC/U1-C. Interacts with SCNM1. Found in a pre-mRNA splicing complex with SFRS4, SFRS5, SNRNP70, SNRPA1, SRRM1 and SRRM2. Found in a pre-mRNA exonic splicing enhancer (ESE) complex with SNRNP70, SNRPA1, SRRM1 and TRA2B/SFRS10. Interacts with dephosphorylated SFRS13A and SFPQ. Interacts with NUDT21/CPSF5, CPSF6, SCAF11, and ZRANB2. Interacts with GEMIN5. Interacts with FUS. Post-translationally, extensively phosphorylated on serine residues in the C-terminal region.

It localises to the nucleus speckle. The protein resides in the nucleus. It is found in the nucleoplasm. Its function is as follows. Component of the spliceosomal U1 snRNP, which is essential for recognition of the pre-mRNA 5' splice-site and the subsequent assembly of the spliceosome. SNRNP70 binds to the loop I region of U1-snRNA. The protein is U1 small nuclear ribonucleoprotein 70 kDa (SNRNP70) of Bos taurus (Bovine).